We begin with the raw amino-acid sequence, 486 residues long: Probable cytosol aminopeptidase (486 aa).

Residues lysine 256 and aspartate 261 each contribute to the Mn(2+) site. Lysine 268 is an active-site residue. Positions 280, 339, and 341 each coordinate Mn(2+). Residue arginine 343 is part of the active site.

The protein belongs to the peptidase M17 family. It depends on Mn(2+) as a cofactor.

The protein localises to the cytoplasm. It catalyses the reaction Release of an N-terminal amino acid, Xaa-|-Yaa-, in which Xaa is preferably Leu, but may be other amino acids including Pro although not Arg or Lys, and Yaa may be Pro. Amino acid amides and methyl esters are also readily hydrolyzed, but rates on arylamides are exceedingly low.. It carries out the reaction Release of an N-terminal amino acid, preferentially leucine, but not glutamic or aspartic acids.. Its function is as follows. Presumably involved in the processing and regular turnover of intracellular proteins. Catalyzes the removal of unsubstituted N-terminal amino acids from various peptides. This is Probable cytosol aminopeptidase from Synechococcus sp. (strain ATCC 27144 / PCC 6301 / SAUG 1402/1) (Anacystis nidulans).